A 101-amino-acid chain; its full sequence is MEVVDPNLDPWKHPGSQPETPCNKCYCKKCCFHCQLCFTRKGLGISYGRKKRRQRRRTPQSGEVHQDPVSKQPLSQTRGDPKGPEESKKKVESKTKTDPSD.

Positions 1–20 are disordered; that stretch reads MEVVDPNLDPWKHPGSQPET. The interaction with human CREBBP stretch occupies residues 1–24; that stretch reads MEVVDPNLDPWKHPGSQPETPCNK. The tract at residues 1 to 48 is transactivation; it reads MEVVDPNLDPWKHPGSQPETPCNKCYCKKCCFHCQLCFTRKGLGISYG. Positions 22, 25, and 27 each coordinate Zn(2+). The tract at residues 22-37 is cysteine-rich; the sequence is CNKCYCKKCCFHCQLC. Lysine 28 is subject to N6-acetyllysine; by host PCAF. Positions 30, 33, 34, and 37 each coordinate Zn(2+). Residues 38-48 are core; the sequence is FTRKGLGISYG. Positions 47-101 are disordered; it reads YGRKKRRQRRRTPQSGEVHQDPVSKQPLSQTRGDPKGPEESKKKVESKTKTDPSD. A compositionally biased stretch (basic residues) spans 48–58; that stretch reads GRKKRRQRRRT. Residues 49–57 carry the Nuclear localization signal, RNA-binding (TAR), and protein transduction motif; the sequence is RKKRRQRRR. Residues 49–86 form an interaction with the host capping enzyme RNGTT region; it reads RKKRRQRRRTPQSGEVHQDPVSKQPLSQTRGDPKGPEE. 2 positions are modified to N6-acetyllysine; by host EP300 and GCN5L2: lysine 50 and lysine 51. Asymmetric dimethylarginine; by host PRMT6 occurs at positions 52 and 53. Lysine 71 is covalently cross-linked (Glycyl lysine isopeptide (Lys-Gly) (interchain with G-Cter in ubiquitin)). The short motif at 78–80 is the Cell attachment site element; sequence RGD. The span at 79–101 shows a compositional bias: basic and acidic residues; sequence GDPKGPEESKKKVESKTKTDPSD.

Belongs to the lentiviruses Tat family. As to quaternary structure, interacts with host CCNT1. Associates with the P-TEFb complex composed at least of Tat, P-TEFb (CDK9 and CCNT1), TAR RNA, RNA Pol II. Recruits the HATs CREBBP, TAF1/TFIID, EP300, PCAF and GCN5L2. Interacts with host KAT5/Tip60; this interaction targets the latter to degradation. Interacts with the host deacetylase SIRT1. Interacts with host capping enzyme RNGTT; this interaction stimulates RNGTT. Binds to host KDR, and to the host integrins ITGAV/ITGB3 and ITGA5/ITGB1. Interacts with host KPNB1/importin beta-1 without previous binding to KPNA1/importin alpha-1. Interacts with EIF2AK2. Interacts with host nucleosome assembly protein NAP1L1; this interaction may be required for the transport of Tat within the nucleus, since the two proteins interact at the nuclear rim. Interacts with host C1QBP/SF2P32; this interaction involves lysine-acetylated Tat. Interacts with the host chemokine receptors CCR2, CCR3 and CXCR4. Interacts with host DPP4/CD26; this interaction may trigger an anti-proliferative effect. Interacts with host LDLR. Interacts with the host extracellular matrix metalloproteinase MMP1. Interacts with host PRMT6; this interaction mediates Tat's methylation. Interacts with, and is ubiquitinated by MDM2/Hdm2. Interacts with host PSMC3 and HTATIP2. Interacts with STAB1; this interaction may overcome SATB1-mediated repression of IL2 and IL2RA (interleukin) in T cells by binding to the same domain than HDAC1. Interacts (when acetylated) with human CDK13, thereby increasing HIV-1 mRNA splicing and promoting the production of the doubly spliced HIV-1 protein Nef. Interacts with host TBP; this interaction modulates the activity of transcriptional pre-initiation complex. Interacts with host RELA. Interacts with host PLSCR1; this interaction negatively regulates Tat transactivation activity by altering its subcellular distribution. Post-translationally, asymmetrical arginine methylation by host PRMT6 seems to diminish the transactivation capacity of Tat and affects the interaction with host CCNT1. In terms of processing, acetylation by EP300, CREBBP, GCN5L2/GCN5 and PCAF regulates the transactivation activity of Tat. EP300-mediated acetylation of Lys-50 promotes dissociation of Tat from the TAR RNA through the competitive binding to PCAF's bromodomain. In addition, the non-acetylated Tat's N-terminus can also interact with PCAF. PCAF-mediated acetylation of Lys-28 enhances Tat's binding to CCNT1. Lys-50 is deacetylated by SIRT1. Polyubiquitination by host MDM2 does not target Tat to degradation, but activates its transactivation function and fosters interaction with CCNT1 and TAR RNA. Post-translationally, phosphorylated by EIF2AK2 on serine and threonine residues adjacent to the basic region important for TAR RNA binding and function. Phosphorylation of Tat by EIF2AK2 is dependent on the prior activation of EIF2AK2 by dsRNA.

The protein localises to the host nucleus. The protein resides in the host nucleolus. It is found in the host cytoplasm. Its subcellular location is the secreted. Functionally, transcriptional activator that increases RNA Pol II processivity, thereby increasing the level of full-length viral transcripts. Recognizes a hairpin structure at the 5'-LTR of the nascent viral mRNAs referred to as the transactivation responsive RNA element (TAR) and recruits the cyclin T1-CDK9 complex (P-TEFb complex) that will in turn hyperphosphorylate the RNA polymerase II to allow efficient elongation. The CDK9 component of P-TEFb and other Tat-activated kinases hyperphosphorylate the C-terminus of RNA Pol II that becomes stabilized and much more processive. Other factors such as HTATSF1/Tat-SF1, SUPT5H/SPT5, and HTATIP2 are also important for Tat's function. Besides its effect on RNA Pol II processivity, Tat induces chromatin remodeling of proviral genes by recruiting the histone acetyltransferases (HATs) CREBBP, EP300 and PCAF to the chromatin. This also contributes to the increase in proviral transcription rate, especially when the provirus integrates in transcriptionally silent region of the host genome. To ensure maximal activation of the LTR, Tat mediates nuclear translocation of NF-kappa-B by interacting with host RELA. Through its interaction with host TBP, Tat may also modulate transcription initiation. Tat can reactivate a latently infected cell by penetrating in it and transactivating its LTR promoter. In the cytoplasm, Tat is thought to act as a translational activator of HIV-1 mRNAs. Its function is as follows. Extracellular circulating Tat can be endocytosed by surrounding uninfected cells via the binding to several surface receptors such as CD26, CXCR4, heparan sulfate proteoglycans (HSPG) or LDLR. Neurons are rarely infected, but they internalize Tat via their LDLR. Through its interaction with nuclear HATs, Tat is potentially able to control the acetylation-dependent cellular gene expression. Modulates the expression of many cellular genes involved in cell survival, proliferation or in coding for cytokines or cytokine receptors. Tat plays a role in T-cell and neurons apoptosis. Tat induced neurotoxicity and apoptosis probably contribute to neuroAIDS. Circulating Tat also acts as a chemokine-like and/or growth factor-like molecule that binds to specific receptors on the surface of the cells, affecting many cellular pathways. In the vascular system, Tat binds to ITGAV/ITGB3 and ITGA5/ITGB1 integrins dimers at the surface of endothelial cells and competes with bFGF for heparin-binding sites, leading to an excess of soluble bFGF. This Homo sapiens (Human) protein is Protein Tat.